Reading from the N-terminus, the 122-residue chain is Mth938 domain-containing protein (122 aa).

The segment at 6-122 (IASLSWGQMK…RVGGVFHSTC (117 aa)) is MTH138-like domain.

Belongs to the AAMDC family.

It is found in the cytoplasm. Functionally, may play a role in preadipocyte differentiation and adipogenesis. This is Mth938 domain-containing protein (AAMDC) from Homo sapiens (Human).